The primary structure comprises 226 residues: Phosphoribosylformylglycinamidine synthase subunit PurQ (226 aa).

The Glutamine amidotransferase type-1 domain maps to 3–225 (FAVIVFPGSN…VKWGARHVTY (223 aa)). Residue Cys-86 is the Nucleophile of the active site. Catalysis depends on residues His-194 and Glu-196.

As to quaternary structure, part of the FGAM synthase complex composed of 1 PurL, 1 PurQ and 2 PurS subunits.

The protein resides in the cytoplasm. The catalysed reaction is N(2)-formyl-N(1)-(5-phospho-beta-D-ribosyl)glycinamide + L-glutamine + ATP + H2O = 2-formamido-N(1)-(5-O-phospho-beta-D-ribosyl)acetamidine + L-glutamate + ADP + phosphate + H(+). It catalyses the reaction L-glutamine + H2O = L-glutamate + NH4(+). The protein operates within purine metabolism; IMP biosynthesis via de novo pathway; 5-amino-1-(5-phospho-D-ribosyl)imidazole from N(2)-formyl-N(1)-(5-phospho-D-ribosyl)glycinamide: step 1/2. Functionally, part of the phosphoribosylformylglycinamidine synthase complex involved in the purines biosynthetic pathway. Catalyzes the ATP-dependent conversion of formylglycinamide ribonucleotide (FGAR) and glutamine to yield formylglycinamidine ribonucleotide (FGAM) and glutamate. The FGAM synthase complex is composed of three subunits. PurQ produces an ammonia molecule by converting glutamine to glutamate. PurL transfers the ammonia molecule to FGAR to form FGAM in an ATP-dependent manner. PurS interacts with PurQ and PurL and is thought to assist in the transfer of the ammonia molecule from PurQ to PurL. The chain is Phosphoribosylformylglycinamidine synthase subunit PurQ from Exiguobacterium sp. (strain ATCC BAA-1283 / AT1b).